Reading from the N-terminus, the 131-residue chain is Phosphoribosyl-AMP cyclohydrolase (131 aa).

Asp78 lines the Mg(2+) pocket. Cys79 serves as a coordination point for Zn(2+). Residues Asp80 and Asp82 each coordinate Mg(2+). Residues Cys96 and Cys103 each contribute to the Zn(2+) site.

Belongs to the PRA-CH family. In terms of assembly, homodimer. The cofactor is Mg(2+). It depends on Zn(2+) as a cofactor.

Its subcellular location is the cytoplasm. The enzyme catalyses 1-(5-phospho-beta-D-ribosyl)-5'-AMP + H2O = 1-(5-phospho-beta-D-ribosyl)-5-[(5-phospho-beta-D-ribosylamino)methylideneamino]imidazole-4-carboxamide. The protein operates within amino-acid biosynthesis; L-histidine biosynthesis; L-histidine from 5-phospho-alpha-D-ribose 1-diphosphate: step 3/9. In terms of biological role, catalyzes the hydrolysis of the adenine ring of phosphoribosyl-AMP. This chain is Phosphoribosyl-AMP cyclohydrolase, found in Neisseria meningitidis serogroup A / serotype 4A (strain DSM 15465 / Z2491).